The chain runs to 198 residues: Ribonuclease HII (198 aa).

In terms of domain architecture, RNase H type-2 spans 3–198 (LSVGGIDEAG…SWETVGKLFK (196 aa)). Residues Asp-9, Glu-10, and Asp-104 each contribute to the a divalent metal cation site.

This sequence belongs to the RNase HII family. The cofactor is Mn(2+). It depends on Mg(2+) as a cofactor.

It is found in the cytoplasm. It carries out the reaction Endonucleolytic cleavage to 5'-phosphomonoester.. Endonuclease that specifically degrades the RNA of RNA-DNA hybrids. The sequence is that of Ribonuclease HII from Pyrobaculum arsenaticum (strain DSM 13514 / JCM 11321 / PZ6).